The sequence spans 511 residues: Serine hydroxymethyltransferase (511 aa).

Lys287 bears the N6-(pyridoxal phosphate)lysine mark.

Belongs to the SHMT family. In terms of assembly, homotetramer. Pyridoxal 5'-phosphate serves as cofactor.

The enzyme catalyses (6R)-5,10-methylene-5,6,7,8-tetrahydrofolate + glycine + H2O = (6S)-5,6,7,8-tetrahydrofolate + L-serine. It participates in one-carbon metabolism; tetrahydrofolate interconversion. Interconversion of serine and glycine. In Caenorhabditis briggsae, this protein is Serine hydroxymethyltransferase.